A 159-amino-acid chain; its full sequence is Putative transmembrane protein ORF159 (159 aa).

2 helical membrane-spanning segments follow: residues 20–40 and 59–79; these read LLLSLLLLLSTICGVLPLSLF and IIAVDIASAICFIIFCNGFCC. A Cell attachment site motif is present at residues 106–108; sequence RGD.

It is found in the host membrane. In Acidianus sp. F28 (AFV-2), this protein is Putative transmembrane protein ORF159.